The chain runs to 486 residues: Ribulose bisphosphate carboxylase large chain, chromosomal (486 aa).

Substrate is bound by residues asparagine 126 and threonine 176. Residue lysine 178 is the Proton acceptor of the active site. Lysine 180 lines the substrate pocket. The Mg(2+) site is built by lysine 204, aspartate 206, and glutamate 207. The residue at position 204 (lysine 204) is an N6-carboxylysine. The Proton acceptor role is filled by histidine 296. Residues arginine 297, histidine 329, and serine 381 each coordinate substrate.

Belongs to the RuBisCO large chain family. Type I subfamily. Heterohexadecamer of 8 large chains and 8 small chains; disulfide-linked. The disulfide link is formed within the large subunit homodimers. Mg(2+) serves as cofactor. In terms of processing, the disulfide bond which can form between Cys-278 in the large chain dimeric partners within the hexadecamer appears to be associated with oxidative stress and protein turnover.

It catalyses the reaction 2 (2R)-3-phosphoglycerate + 2 H(+) = D-ribulose 1,5-bisphosphate + CO2 + H2O. The enzyme catalyses D-ribulose 1,5-bisphosphate + O2 = 2-phosphoglycolate + (2R)-3-phosphoglycerate + 2 H(+). In terms of biological role, ruBisCO catalyzes two reactions: the carboxylation of D-ribulose 1,5-bisphosphate, the primary event in carbon dioxide fixation, as well as the oxidative fragmentation of the pentose substrate. Both reactions occur simultaneously and in competition at the same active site. The polypeptide is Ribulose bisphosphate carboxylase large chain, chromosomal (cbbL1) (Cupriavidus necator (strain ATCC 17699 / DSM 428 / KCTC 22496 / NCIMB 10442 / H16 / Stanier 337) (Ralstonia eutropha)).